We begin with the raw amino-acid sequence, 347 residues long: Actin-like protein MamK (347 aa).

Residues lysine 9, 20-21 (TS), and aspartate 76 contribute to the ATP site. Glutamate 143 provides a ligand contact to Mg(2+). Residues 164-166 (AGT), 218-222 (KEQFS), and glycine 289 each bind ATP.

This sequence belongs to the FtsA/MreB family. MamK subfamily. As to quaternary structure, forms cytoplasmic filaments. Filaments are parallel (polar) and double-helical. MamK subunits from each of the two strands are juxtaposed, each monomer binds ADP. At cell poles and septa interacts with methyl-accepting chemotaxis protein Amb0944 (MCP10). Forms filaments with MamK-like protein.

It is found in the cytoplasm. The protein localises to the cytoskeleton. It localises to the magnetosome membrane. The enzyme catalyses ATP + H2O = ADP + phosphate + H(+). Its activity is regulated as follows. Filament turnover is promoted by MamJ and/or LimJ which have overlapping function; at least one other protein is required for turnover. MamK filament dynamics are probably required for the assembly or maintenance of the magnetosome chain. Protein with ATPase activity which forms dynamic cytoplasmic filaments (probably with paralog MamK-like) that organize magnetosomes into long chains running parallel to the long axis of the cell. Turnover of MamK filaments is probably promoted by MamK-like, which provides a monomer pool. Forms twisted filaments in the presence of ATP or GTP. Serves to close gaps between magnetosomes in the chain. Interaction with MCP10 is involved in controlling the response to magnetic fields, possibly by controlling flagellar rotation. Expression in E.coli yields a filament in the cell's longitudinal axis; the protein nucleates at several sites and one extremity of the filament is located at the cell pole. The protein is Actin-like protein MamK (mamK) of Paramagnetospirillum magneticum (strain ATCC 700264 / AMB-1) (Magnetospirillum magneticum).